Reading from the N-terminus, the 159-residue chain is Secreted RxLR effector protein 50 (159 aa).

A signal peptide spans 1 to 19 (MRSSTVLYVLGAAILAVNG). The RxLR-dEER motif lies at 38–54 (RWLRSNAMEHETDDEER).

The protein belongs to the RxLR effector family.

Its subcellular location is the secreted. It localises to the host nucleus. The protein localises to the host cytoplasm. Functionally, secreted effector that completely suppresses the host cell death induced by cell death-inducing proteins. In Plasmopara viticola (Downy mildew of grapevine), this protein is Secreted RxLR effector protein 50.